Consider the following 217-residue polypeptide: Probable transaldolase (217 aa).

Lysine 83 functions as the Schiff-base intermediate with substrate in the catalytic mechanism.

Belongs to the transaldolase family. Type 3B subfamily.

It localises to the cytoplasm. The enzyme catalyses D-sedoheptulose 7-phosphate + D-glyceraldehyde 3-phosphate = D-erythrose 4-phosphate + beta-D-fructose 6-phosphate. It participates in carbohydrate degradation; pentose phosphate pathway; D-glyceraldehyde 3-phosphate and beta-D-fructose 6-phosphate from D-ribose 5-phosphate and D-xylulose 5-phosphate (non-oxidative stage): step 2/3. Transaldolase is important for the balance of metabolites in the pentose-phosphate pathway. This chain is Probable transaldolase, found in Dinoroseobacter shibae (strain DSM 16493 / NCIMB 14021 / DFL 12).